Here is a 511-residue protein sequence, read N- to C-terminus: MSNAPEQKNPQNDPSPAVSLNDQMKRRFEERTHLAEAGINPYPYKFDVTTTSKAIIDSFSDENPADVSVAGRIMAIRRMGKASFLHIQDSEGRIQIYLKKDDVGEASYNTFKLLDIGDIVGVSGFTFKTKTGEISVHARQFELLAKSLRPIPIAKEKEVDGQKVIYDAFSDRELRYRQRYVDLIVNPEVRGTFIKRTKIVALMRNYFASNGWLEVETPILQPIYGGAAARPFTTHHNALDMQLYLRIANELYLKRLIVGGFDGVFEFAKDFRNEGIDRFHNPEFTQVELYVAYKDYIWMMELVEDLLHKACVEVNGKDSTMFLGNEINLKPPFRRLTIADSIREYTGMEIRGKSEAQLRDIAKDLGLELDPKISSGKIIDEIFGEFVEPKLIQPTFITDYPEEMSPLAKKHRSEPGLVERFELIVGGKEVCNSFSELNDPVIQRERLEEQARLRQRGDDEAMIVDEDFLRALEYGMPPCAGLGIGIDRMVMLLTGQDSIRDVIFFPHMKPE.

2 residues coordinate Mg(2+): Glu422 and Glu429.

Belongs to the class-II aminoacyl-tRNA synthetase family. Homodimer. Mg(2+) serves as cofactor.

The protein resides in the cytoplasm. It catalyses the reaction tRNA(Lys) + L-lysine + ATP = L-lysyl-tRNA(Lys) + AMP + diphosphate. The polypeptide is Lysine--tRNA ligase (Chlorobaculum tepidum (strain ATCC 49652 / DSM 12025 / NBRC 103806 / TLS) (Chlorobium tepidum)).